A 255-amino-acid chain; its full sequence is tRNA pseudouridine synthase A (255 aa).

The active-site Nucleophile is the D52. Y111 is a binding site for substrate.

The protein belongs to the tRNA pseudouridine synthase TruA family. Homodimer.

It catalyses the reaction uridine(38/39/40) in tRNA = pseudouridine(38/39/40) in tRNA. Its function is as follows. Formation of pseudouridine at positions 38, 39 and 40 in the anticodon stem and loop of transfer RNAs. In Cereibacter sphaeroides (strain ATCC 17023 / DSM 158 / JCM 6121 / CCUG 31486 / LMG 2827 / NBRC 12203 / NCIMB 8253 / ATH 2.4.1.) (Rhodobacter sphaeroides), this protein is tRNA pseudouridine synthase A.